Consider the following 533-residue polypeptide: MSTLLAPLHPYAGRVVVVGVSGGADSVALLRALVQAEARPVVAHLDHALRPNSAEDAQWVHDLAEQLGAAHTSTRVDVAAVAARRGWNVEDAARRVRYEVLSRAARQHGAHTVMTAHTRRDQAETVLMGLLRGEAVLTGIPAVRGRVRRPWLDVPRSEIEAYLKALGQEWREDPTNADVTYTRAWLRTEVMPVLAARFPGVEAALGRVAKLAQQDDEALRDLAAALTPHAPRDRVPLAVLRRRVTQELKSAGLQFHVGQVDQLAEAQRTGETRHVTLLGGRGVTVTGGALHLAARAWPLPSFSWPEDWTLRTRQPGDRITLPGGTRKVSDVLTDLKIPRDQRDDVPLLVSAQGVKWIGVEPNIWAKGARAVVGQPADLLDTAMGEALGLAREAALAQEVPVGAVVLGPGGRIIGSGRNTSRADSDMTRHAELAALRAATAELGTAYLTGCTLVVTLEPCPMCLGAALEARVERIVYGASNPKAGALGGVSDLLSSHWGHVPAVTGGVRAQDAARVLRDSFQELRQRRLKSPDV.

21–26 is an ATP binding site; that stretch reads SGGADS. Residues 377–500 form the CMP/dCMP-type deaminase domain; the sequence is DLLDTAMGEA…DLLSSHWGHV (124 aa).

It belongs to the tRNA(Ile)-lysidine synthase family.

It localises to the cytoplasm. It carries out the reaction cytidine(34) in tRNA(Ile2) + L-lysine + ATP = lysidine(34) in tRNA(Ile2) + AMP + diphosphate + H(+). Ligates lysine onto the cytidine present at position 34 of the AUA codon-specific tRNA(Ile) that contains the anticodon CAU, in an ATP-dependent manner. Cytidine is converted to lysidine, thus changing the amino acid specificity of the tRNA from methionine to isoleucine. The protein is tRNA(Ile)-lysidine synthase of Deinococcus deserti (strain DSM 17065 / CIP 109153 / LMG 22923 / VCD115).